The following is a 356-amino-acid chain: Methionine import ATP-binding protein MetN 1 (356 aa).

An ABC transporter domain is found at 2–241; the sequence is IELKNISVTF…PQQPLTKDFI (240 aa). Residue 38–45 coordinates ATP; the sequence is GYSGAGKS.

This sequence belongs to the ABC transporter superfamily. Methionine importer (TC 3.A.1.24) family. The complex is composed of two ATP-binding proteins (MetN), two transmembrane proteins (MetI) and a solute-binding protein (MetQ).

Its subcellular location is the cell membrane. The catalysed reaction is L-methionine(out) + ATP + H2O = L-methionine(in) + ADP + phosphate + H(+). It carries out the reaction D-methionine(out) + ATP + H2O = D-methionine(in) + ADP + phosphate + H(+). In terms of biological role, part of the ABC transporter complex MetNIQ involved in methionine import. Responsible for energy coupling to the transport system. The sequence is that of Methionine import ATP-binding protein MetN 1 from Enterococcus faecalis (strain ATCC 700802 / V583).